Reading from the N-terminus, the 325-residue chain is Elongation factor P--(R)-beta-lysine ligase (325 aa).

76-78 is a substrate binding site; it reads SPE. ATP-binding positions include 100-102 and asparagine 109; that span reads RNE. A substrate-binding site is contributed by tyrosine 118. Residue 244–245 coordinates ATP; sequence EL. A substrate-binding site is contributed by glutamate 251. Residue glycine 300 participates in ATP binding.

It belongs to the class-II aminoacyl-tRNA synthetase family. EpmA subfamily. As to quaternary structure, homodimer.

It carries out the reaction D-beta-lysine + L-lysyl-[protein] + ATP = N(6)-((3R)-3,6-diaminohexanoyl)-L-lysyl-[protein] + AMP + diphosphate + H(+). Its function is as follows. With EpmB is involved in the beta-lysylation step of the post-translational modification of translation elongation factor P (EF-P). Catalyzes the ATP-dependent activation of (R)-beta-lysine produced by EpmB, forming a lysyl-adenylate, from which the beta-lysyl moiety is then transferred to the epsilon-amino group of a conserved specific lysine residue in EF-P. This chain is Elongation factor P--(R)-beta-lysine ligase, found in Pectobacterium atrosepticum (strain SCRI 1043 / ATCC BAA-672) (Erwinia carotovora subsp. atroseptica).